We begin with the raw amino-acid sequence, 64 residues long: Large ribosomal subunit protein bL32 (64 aa).

The segment at 1-35 (MAVQKSRVTPSRRGMRRAHDALSAKQLSTDPTTGE) is disordered.

It belongs to the bacterial ribosomal protein bL32 family.

The chain is Large ribosomal subunit protein bL32 from Stenotrophomonas maltophilia (strain R551-3).